A 303-amino-acid chain; its full sequence is GILPECKLVPEEISFVLSTRENRDGVYLTLQKLKNGKMFKNSDLSSKKVPFLIHGFISSATNKNYADMTRALLDKDDIMVISIDWRDGACSNEFALLKFIGYPKAVENTRAVGKYIADFSKILIQKYKVLLENIRLIGHSLGAQIAGFAGKEFQRFKLGKYPEIIGLDPAGPSFKKKDCPERICETDAHYVQILHTSSNLGTERTLGTVDFYINDGSNQPGCTYIIGETCSHTRAVKYLTECIRRECCLIGVPQSKNPQPVSKCTRNECVCVGLNAKEYPKKGSFYVPVEAKAPFCNNNGKII.

Cysteine 6 and cysteine 90 are disulfide-bonded. The active-site Nucleophile is serine 140. Aspartate 168 functions as the Charge relay system in the catalytic mechanism. Cysteine 179 and cysteine 184 are disulfide-bonded. The active-site Charge relay system is histidine 232. 3 disulfides stabilise this stretch: cysteine 247–cysteine 271, cysteine 248–cysteine 296, and cysteine 264–cysteine 269.

This sequence belongs to the AB hydrolase superfamily. Lipase family. As to expression, expressed by the venom gland.

The protein localises to the secreted. The enzyme catalyses a 1,2-diacyl-sn-glycero-3-phosphocholine + H2O = a 2-acyl-sn-glycero-3-phosphocholine + a fatty acid + H(+). In terms of biological role, catalyzes the hydrolysis of phosphatidylcholine with phospholipase A1 activity. May act as an allergen and induce hemolytic activity. The sequence is that of Phospholipase A1 2 from Dolichovespula maculata (Bald-faced hornet).